The sequence spans 267 residues: Dihydropteroate synthase (267 aa).

Positions 1–251 (MTKTKIIGIL…NVDLNVKLAQ (251 aa)) constitute a Pterin-binding domain. A Mg(2+)-binding site is contributed by Asn11. (7,8-dihydropterin-6-yl)methyl diphosphate-binding positions include Thr51, Asp84, Asn103, Asp167, Lys203, and 239 to 241 (RVH).

The protein belongs to the DHPS family. It depends on Mg(2+) as a cofactor.

The enzyme catalyses (7,8-dihydropterin-6-yl)methyl diphosphate + 4-aminobenzoate = 7,8-dihydropteroate + diphosphate. Its pathway is cofactor biosynthesis; tetrahydrofolate biosynthesis; 7,8-dihydrofolate from 2-amino-4-hydroxy-6-hydroxymethyl-7,8-dihydropteridine diphosphate and 4-aminobenzoate: step 1/2. In terms of biological role, catalyzes the condensation of para-aminobenzoate (pABA) with 6-hydroxymethyl-7,8-dihydropterin diphosphate (DHPt-PP) to form 7,8-dihydropteroate (H2Pte), the immediate precursor of folate derivatives. The polypeptide is Dihydropteroate synthase (folP) (Staphylococcus haemolyticus).